The following is a 471-amino-acid chain: Alpha-1,3/1,6-mannosyltransferase alg-2 (471 aa).

Asparagine 178 and asparagine 279 each carry an N-linked (GlcNAc...) asparagine glycan. A helical membrane pass occupies residues 446 to 466 (GMILLVVGAAVAAVAGVISAV).

Belongs to the glycosyltransferase group 1 family. Glycosyltransferase 4 subfamily.

The protein resides in the endoplasmic reticulum membrane. The enzyme catalyses a beta-D-Man-(1-&gt;4)-beta-D-GlcNAc-(1-&gt;4)-alpha-D-GlcNAc-diphospho-di-trans,poly-cis-dolichol + GDP-alpha-D-mannose = an alpha-D-Man-(1-&gt;3)-beta-D-Man-(1-&gt;4)-beta-D-GlcNAc-(1-&gt;4)-alpha-D-GlcNAc-diphospho-di-trans,poly-cis-dolichol + GDP + H(+). It catalyses the reaction an alpha-D-Man-(1-&gt;3)-beta-D-Man-(1-&gt;4)-beta-D-GlcNAc-(1-&gt;4)-alpha-D-GlcNAc-diphospho-di-trans,poly-cis-dolichol + GDP-alpha-D-mannose = an alpha-D-Man-(1-&gt;3)-[alpha-D-Man-(1-&gt;6)]-beta-D-Man-(1-&gt;4)-beta-D-GlcNAc-(1-&gt;4)-alpha-D-GlcNAc-diphospho-di-trans,poly-cis-dolichol + GDP + H(+). It functions in the pathway protein modification; protein glycosylation. Mannosylates Man(2)GlcNAc(2)-dolichol diphosphate and Man(1)GlcNAc(2)-dolichol diphosphate to form Man(3)GlcNAc(2)-dolichol diphosphate. In Neurospora crassa (strain ATCC 24698 / 74-OR23-1A / CBS 708.71 / DSM 1257 / FGSC 987), this protein is Alpha-1,3/1,6-mannosyltransferase alg-2 (alg-2).